We begin with the raw amino-acid sequence, 210 residues long: Acyl-homoserine-lactone synthase (210 aa).

This sequence belongs to the autoinducer synthase family.

It carries out the reaction a fatty acyl-[ACP] + S-adenosyl-L-methionine = an N-acyl-L-homoserine lactone + S-methyl-5'-thioadenosine + holo-[ACP] + H(+). Required for the synthesis of OHHL (N-(3-oxohexanoyl)-L-homoserine lactone), an autoinducer molecule which binds to EsaR. OHHL is necessary for biosynthesis of EPS virulence factor (extracellular heteropolysaccharide) which plays a role in the development of Stewart's wilt on sweet corn. The sequence is that of Acyl-homoserine-lactone synthase (esaI) from Pantoea stewartii subsp. stewartii (Erwinia stewartii).